The following is an 886-amino-acid chain: Linoleate 9S-lipoxygenase 5 (886 aa).

In terms of domain architecture, PLAT spans 35–180; it reads IEGEVVVMKK…RYRSDRVFFS (146 aa). Residues 183 to 886 enclose the Lipoxygenase domain; that stretch reads AYLPSETPEL…GKGIPNSVSI (704 aa). The segment at 234–266 is disordered; sequence GPDSVRPVLGGSPELPYPRRGKTGRKSTKSDPK. The Fe cation site is built by His542, His547, His733, Asn737, and Ile886.

Belongs to the lipoxygenase family. It depends on Fe cation as a cofactor. As to expression, expressed in roots.

It carries out the reaction (9Z,12Z)-octadecadienoate + O2 = (9S)-hydroperoxy-(10E,12Z)-octadecadienoate. The enzyme catalyses (9Z,12Z,15Z)-octadecatrienoate + O2 = (9S)-hydroperoxy-(10E,12Z,15Z)-octadecatrienoate. The protein operates within lipid metabolism; oxylipin biosynthesis. Functionally, 9S-lipoxygenase that can use linoleic acid or linolenic acid as substrates. Plant lipoxygenases may be involved in a number of diverse aspects of plant physiology including growth and development, pest resistance, and senescence or responses to wounding. Catalyzes the hydroperoxidation of lipids containing a cis,cis-1,4-pentadiene structure. Function as regulators of root development by controlling the emergence of lateral roots. 9S-lypoxygenase-derived oxylipins may play an antagonistic role to ethylene signaling in the control of responses involving oxidative stress, lipid peroxidation and plant defense. LOX5-derived oxylipins may facilitate performance of green peach aphid (Myzus persicae) on foliage. 9S-lypoxygenase-derived oxylipins are engaged during infection to control the balance between salicylic acid (SA) and jasmonate (JA) signaling to facilitate infection by the fungal pathogen Fusarium graminearum. 9S-lypoxygenase-derived oxylipins activate brassinosteroid signaling to promote cell wall-based defense and limit pathogen infection. Does not seem to contribute to the oxidation of free fatty acids during seed aging. This is Linoleate 9S-lipoxygenase 5 from Arabidopsis thaliana (Mouse-ear cress).